The sequence spans 320 residues: Malate dehydrogenase (320 aa).

Residues 10–15 (GAGQIG) and Asp-34 each bind NAD(+). Positions 83 and 89 each coordinate substrate. NAD(+)-binding positions include Asn-96 and 119–121 (ITN). Residues Asn-121 and Arg-152 each coordinate substrate. The active-site Proton acceptor is the His-176.

It belongs to the LDH/MDH superfamily. MDH type 3 family.

It carries out the reaction (S)-malate + NAD(+) = oxaloacetate + NADH + H(+). Functionally, catalyzes the reversible oxidation of malate to oxaloacetate. This is Malate dehydrogenase from Roseobacter denitrificans (strain ATCC 33942 / OCh 114) (Erythrobacter sp. (strain OCh 114)).